The primary structure comprises 1202 residues: DNA-directed RNA polymerase subunit beta (1202 aa).

The segment at 1154-1202 is disordered; sequence NMDEDDDEVVNVDALAKYAEEHKADDKKNEEENKSEATSTTTDDKTNQN. A compositionally biased stretch (basic and acidic residues) spans 1171 to 1188; that stretch reads YAEEHKADDKKNEEENKS.

The protein belongs to the RNA polymerase beta chain family. The RNAP catalytic core consists of 2 alpha, 1 beta, 1 beta' and 1 omega subunit. When a sigma factor is associated with the core the holoenzyme is formed, which can initiate transcription.

It carries out the reaction RNA(n) + a ribonucleoside 5'-triphosphate = RNA(n+1) + diphosphate. DNA-dependent RNA polymerase catalyzes the transcription of DNA into RNA using the four ribonucleoside triphosphates as substrates. The sequence is that of DNA-directed RNA polymerase subunit beta from Limosilactobacillus reuteri (strain DSM 20016) (Lactobacillus reuteri).